Here is a 400-residue protein sequence, read N- to C-terminus: CinA-like protein (400 aa).

The protein belongs to the CinA family.

In Sulfurihydrogenibium sp. (strain YO3AOP1), this protein is CinA-like protein.